The primary structure comprises 61 residues: MTKRVRITLVRSTIGQREPVRRTVRSLGLRKLHSMVEKDGSPAVLGMVRAVSHLVRVEELG.

This sequence belongs to the universal ribosomal protein uL30 family. Part of the 50S ribosomal subunit.

The polypeptide is Large ribosomal subunit protein uL30 (Treponema pallidum subsp. pallidum (strain SS14)).